Reading from the N-terminus, the 366-residue chain is Tudor domain-containing protein 10 (366 aa).

Residues 34-107 (TEVYVGNLPL…RKLFVNTSKR (74 aa)) enclose the RRM domain. The region spanning 210-317 (FWAMHVTEAL…PLTQPFMLEK (108 aa)) is the Tudor domain. A coiled-coil region spans residues 216–237 (TEALHQNMQALFSTLAQAEEQQ).

The chain is Tudor domain-containing protein 10 (TDRD10) from Homo sapiens (Human).